Reading from the N-terminus, the 192-residue chain is MEERNEQVVEEVKEEVKEAQVEEAVTSEDSEETVEEKSEAALLQEKVDELQAKLTETEGRMLRLQADFENYKRRVQMDKQAAEKYRAQSLVSDILPALDNFERAMQVEATDEQMKSLLQGMEMVYRQLLEAMTKEGVEAIEAVGKQFDPHEHQAVMQVEDSEFESNAVVEEFQKGYKLKDRVIRPSMVKVNQ.

Residues 1 to 20 are compositionally biased toward basic and acidic residues; the sequence is MEERNEQVVEEVKEEVKEAQ. The disordered stretch occupies residues 1 to 34; the sequence is MEERNEQVVEEVKEEVKEAQVEEAVTSEDSEETV. The span at 25 to 34 shows a compositional bias: acidic residues; it reads VTSEDSEETV.

Belongs to the GrpE family. In terms of assembly, homodimer.

The protein localises to the cytoplasm. Functionally, participates actively in the response to hyperosmotic and heat shock by preventing the aggregation of stress-denatured proteins, in association with DnaK and GrpE. It is the nucleotide exchange factor for DnaK and may function as a thermosensor. Unfolded proteins bind initially to DnaJ; upon interaction with the DnaJ-bound protein, DnaK hydrolyzes its bound ATP, resulting in the formation of a stable complex. GrpE releases ADP from DnaK; ATP binding to DnaK triggers the release of the substrate protein, thus completing the reaction cycle. Several rounds of ATP-dependent interactions between DnaJ, DnaK and GrpE are required for fully efficient folding. This Bacillus cereus (strain AH187) protein is Protein GrpE.